The following is a 113-amino-acid chain: Large ribosomal subunit protein uL22 (113 aa).

Belongs to the universal ribosomal protein uL22 family. As to quaternary structure, part of the 50S ribosomal subunit.

In terms of biological role, this protein binds specifically to 23S rRNA; its binding is stimulated by other ribosomal proteins, e.g. L4, L17, and L20. It is important during the early stages of 50S assembly. It makes multiple contacts with different domains of the 23S rRNA in the assembled 50S subunit and ribosome. Functionally, the globular domain of the protein is located near the polypeptide exit tunnel on the outside of the subunit, while an extended beta-hairpin is found that lines the wall of the exit tunnel in the center of the 70S ribosome. This Thermus thermophilus (strain ATCC BAA-163 / DSM 7039 / HB27) protein is Large ribosomal subunit protein uL22.